The chain runs to 427 residues: Male abnormal protein mab-31 (427 aa).

Residues 68–102 are disordered; sequence PIGTGRFPNPSPPRSSSGTNTPIRKTPGSRPDRGK.

Its subcellular location is the nucleus. In terms of biological role, putative transcription factor. Acts in a TGF-beta-like pathway during development of male-specific genital sensilla (simple sense organs), known as rays. Involved in production of reactive oxygen species (ROS), acting downstream of the TGF-beta-like dbl-1 signaling pathway. Involved in locomotory behavior. The chain is Male abnormal protein mab-31 from Caenorhabditis elegans.